Reading from the N-terminus, the 457-residue chain is Allantoinase (457 aa).

Zn(2+) is bound by residues His-58, His-60, Lys-145, His-181, His-237, and Asp-310. Lys-145 carries the post-translational modification N6-carboxylysine.

Belongs to the metallo-dependent hydrolases superfamily. Allantoinase family. Homotetramer. Zn(2+) is required as a cofactor. Carboxylation allows a single lysine to coordinate two zinc ions.

The enzyme catalyses (S)-allantoin + H2O = allantoate + H(+). Its pathway is nitrogen metabolism; (S)-allantoin degradation; allantoate from (S)-allantoin: step 1/1. Catalyzes the conversion of allantoin (5-ureidohydantoin) to allantoic acid by hydrolytic cleavage of the five-member hydantoin ring. The protein is Allantoinase of Solibacter usitatus (strain Ellin6076).